A 480-amino-acid chain; its full sequence is Docking protein 1 (480 aa).

Met1 is subject to N-acetylmethionine. The PH domain occupies 3-119 (GALMEGPLFL…WVQILCRTAF (117 aa)). A Phosphoserine modification is found at Ser48. The IRS-type PTB domain maps to 151 to 259 (EGSQFWVTSQ…QQQKAQGKVG (109 aa)). Over residues 253–262 (KAQGKVGQGQ) the composition is skewed to low complexity. Residues 253–328 (KAQGKVGQGQ…GSTPAGAGEG (76 aa)) are disordered. The segment covering 265–276 (TRTDSHDGETEG) has biased composition (basic and acidic residues). 2 positions are modified to phosphoserine: Ser269 and Ser290. Residues Tyr295, Tyr336, and Tyr340 each carry the phosphotyrosine modification. A Phosphotyrosine; by INSR modification is found at Tyr361. Residue Tyr376 is modified to Phosphotyrosine. A Phosphotyrosine; by INSR modification is found at Tyr397. The segment at 398–480 (ELPYNPATDD…RVGVKSEGST (83 aa)) is disordered. A Phosphotyrosine modification is found at Tyr408. A compositionally biased stretch (pro residues) spans 410-423 (VPPPRSSKPTPAPK). Residue Ser415 is modified to Phosphoserine. Positions 432–445 (SGTTAGSGSKGSDT) are enriched in low complexity. The segment covering 446–455 (ALYSQVQKSG) has biased composition (polar residues). The residue at position 448 (Tyr448) is a Phosphotyrosine.

Belongs to the DOK family. Type A subfamily. As to quaternary structure, interacts with RasGAP and INPP5D/SHIP1. Interacts directly with phosphorylated ITGB3. Interacts with SRMS (via the SH2 and SH3 domains). Post-translationally, constitutively tyrosine-phosphorylated. Phosphorylated by TEC. Phosphorylated by LYN. Phosphorylated on tyrosine residues by the insulin receptor kinase. Results in the negative regulation of the insulin signaling pathway. Phosphorylated on tyrosine residues by SRMS.

Its subcellular location is the cytoplasm. The protein localises to the nucleus. Its function is as follows. DOK proteins are enzymatically inert adaptor or scaffolding proteins. They provide a docking platform for the assembly of multimolecular signaling complexes. DOK1 appears to be a negative regulator of the insulin signaling pathway. Modulates integrin activation by competing with talin for the same binding site on ITGB3. The chain is Docking protein 1 (Dok1) from Rattus norvegicus (Rat).